A 327-amino-acid polypeptide reads, in one-letter code: MKQPGFIRLATLALLSTLSFFSHGETILRLAYAENSQPVKDALHFLGQQVEEKTGGDIKVQYFPDGQLGGERELVELTQVGVVDITKVSSGLMESFSPEYGVFSLPYLFATVEEYYRVMDNPQVMEPVYQSTAAQGFIGVGWYDSGARNFYMSKAPIKRIEDLRGKKIRVMQSETAIQTLKLLGASPIAMSQAEVYTSLQQGILDGAENNEFALTIARHGEVARYYTYDMHTRIPDILLMSTLTLEKLTPEQQRIVEAAIKASIEFEKAAWDKEIEKTRLAAVKDFNVEFYEIDKKPFQEAVQPIYDGLKNKPRLYGLYQRIQTAKN.

The first 24 residues, 1–24 (MKQPGFIRLATLALLSTLSFFSHG), serve as a signal peptide directing secretion.

This is an uncharacterized protein from Salmonella typhimurium (strain LT2 / SGSC1412 / ATCC 700720).